Reading from the N-terminus, the 937-residue chain is Protein Niban 1 (937 aa).

G2 carries N-myristoyl glycine lipidation. Phosphoserine is present on residues S578, S581, S595, S601, and S646. Positions 584-595 (DLKTSMGSNQAS) are enriched in polar residues. Disordered regions lie at residues 584-710 (DLKT…GSLR) and 724-891 (SAPE…LGGN). Over residues 640-651 (ASISGSSPPSGE) the composition is skewed to low complexity. Residues 655 to 681 (VSVSGVDNSAGNPLSADNSAGPLSSHL) are compositionally biased toward polar residues. The span at 688–701 (EPPKDEETAHKRPE) shows a compositional bias: basic and acidic residues. Residues S708 and S768 each carry the phosphoserine modification. Composition is skewed to polar residues over residues 802-817 (PTSQ…NTSC) and 855-869 (VTVT…SSNP).

The protein belongs to the Niban family. As to expression, detected in brain, lung, spleen and skeletal muscle. Expressed in small renal tumors but not in normal kidney.

It localises to the cytoplasm. The protein resides in the membrane. Its function is as follows. Regulates phosphorylation of a number of proteins involved in translation regulation including EIF2A, EIF4EBP1 and RPS6KB1. May be involved in the endoplasmic reticulum stress response. The polypeptide is Protein Niban 1 (Rattus norvegicus (Rat)).